The sequence spans 314 residues: MPDSLRIVFAGTPEFAAEHLKALLASQHEVIAVYTQPDRPAGRGQKLMPSPVKQLAVEHGIPVHQPASLRNEEAQAELAALKPDLMVVVAYGLILPQVVLDTPRLGCINSHASLLPRWRGAAPIQRAVQAGDLESGVTVMQMEAGLDTGPMLLKVSTPISAEDTGGSLHDRLARLGPQAVLQAIDGLAAGTLIGELQDDAQANYAHKLNKDEARLDFSRPAVELERLIRAFHPWPICHTTLNGDALKVHAAELGEGSGAPGTILAADKNGLTVACGEGALRLTRLQLPGGKPLAFSDLYNSRREQFAPGLVLGQ.

113–116 serves as a coordination point for (6S)-5,6,7,8-tetrahydrofolate; it reads SLLP.

Belongs to the Fmt family.

The catalysed reaction is L-methionyl-tRNA(fMet) + (6R)-10-formyltetrahydrofolate = N-formyl-L-methionyl-tRNA(fMet) + (6S)-5,6,7,8-tetrahydrofolate + H(+). In terms of biological role, attaches a formyl group to the free amino group of methionyl-tRNA(fMet). The formyl group appears to play a dual role in the initiator identity of N-formylmethionyl-tRNA by promoting its recognition by IF2 and preventing the misappropriation of this tRNA by the elongation apparatus. This chain is Methionyl-tRNA formyltransferase, found in Ectopseudomonas mendocina (strain ymp) (Pseudomonas mendocina).